Reading from the N-terminus, the 327-residue chain is Methionine import ATP-binding protein MetN (327 aa).

The ABC transporter domain maps to 3-239 (VELKNIEKIY…PKHAVTKELL (237 aa)). 36–43 (GYSGAGKS) serves as a coordination point for ATP.

Belongs to the ABC transporter superfamily. Methionine importer (TC 3.A.1.24) family. In terms of assembly, the complex is composed of two ATP-binding proteins (MetN), two transmembrane proteins (MetI) and a solute-binding protein (MetQ).

Its subcellular location is the cell inner membrane. It catalyses the reaction L-methionine(out) + ATP + H2O = L-methionine(in) + ADP + phosphate + H(+). It carries out the reaction D-methionine(out) + ATP + H2O = D-methionine(in) + ADP + phosphate + H(+). Part of the ABC transporter complex MetNIQ involved in methionine import. Responsible for energy coupling to the transport system. The protein is Methionine import ATP-binding protein MetN of Helicobacter pylori (strain HPAG1).